We begin with the raw amino-acid sequence, 343 residues long: Cytoplasmic tRNA 2-thiolation protein 1 (343 aa).

Belongs to the TtcA family. CTU1/NCS6/ATPBD3 subfamily.

It localises to the cytoplasm. It functions in the pathway tRNA modification; 5-methoxycarbonylmethyl-2-thiouridine-tRNA biosynthesis. Its function is as follows. Plays a central role in 2-thiolation of mcm(5)S(2)U at tRNA wobble positions of tRNA(Lys), tRNA(Glu) and tRNA(Gln). Directly binds tRNAs and probably acts by catalyzing adenylation of tRNAs, an intermediate required for 2-thiolation. It is unclear whether it acts as a sulfurtransferase that transfers sulfur from thiocarboxylated URM1 onto the uridine of tRNAs at wobble position. The polypeptide is Cytoplasmic tRNA 2-thiolation protein 1 (Drosophila pseudoobscura pseudoobscura (Fruit fly)).